Here is a 616-residue protein sequence, read N- to C-terminus: MPKYRSATTTHGRNMAGARALWRATGMTDADFGKPIIAVVNSFTQFVPGHVHLRDLGKLVAEQIEAAGGVAKEFNTIAVDDGIAMGHGGMLYSLPSRELIADSVEYMVNAHCADAMVCISNCDKITPGMLMASLRLNIPVIFVSGGPMEAGKTKLSDQIIKLDLVDAMIQGADPKVSDSQSDQVERSACPTCGSCSGMFTANSMNCLTEALGLSQPGNGSLLATHADRKQLFLNAGKRIVELTKRYYEQNDESALPRNIASKAAFENAMTLDIAMGGSTNTVLHLLAAAQEAEIDFTMSDIDKLSRKVPQLCKVAPSTQKYHMEDVHRAGGVIGILGELDRAGLLNRDVKNVLGLTLPQTLEQYDVMLTQDDSVKNMFRAGPAGIRTTQAFSQDCRWDSLDDDRANGCIRSLEHAYSKEGGLAVLYGNFAENGCIVKTAGVDDSILKFTGPAKVYESQDDAVEAILGGKVVAGDVVVIRYEGPKGGPGMQEMLYPTSFLKSMGLGKACALITDGRFSGGTSGLSIGHVSPEAASGGSIGLIEDGDLIAIDIPNRGIQLQVSDAELAARREAQEARGDKAWTPKNRERQVSFALRAYASLATSADKGAVRDKSKLGG.

Asp-81 is a Mg(2+) binding site. Cys-122 contributes to the [2Fe-2S] cluster binding site. Mg(2+)-binding residues include Asp-123 and Lys-124. Position 124 is an N6-carboxylysine (Lys-124). Cys-195 contributes to the [2Fe-2S] cluster binding site. Residue Glu-491 coordinates Mg(2+). The active-site Proton acceptor is the Ser-517.

The protein belongs to the IlvD/Edd family. As to quaternary structure, homodimer. [2Fe-2S] cluster serves as cofactor. The cofactor is Mg(2+).

The catalysed reaction is (2R)-2,3-dihydroxy-3-methylbutanoate = 3-methyl-2-oxobutanoate + H2O. It carries out the reaction (2R,3R)-2,3-dihydroxy-3-methylpentanoate = (S)-3-methyl-2-oxopentanoate + H2O. It participates in amino-acid biosynthesis; L-isoleucine biosynthesis; L-isoleucine from 2-oxobutanoate: step 3/4. Its pathway is amino-acid biosynthesis; L-valine biosynthesis; L-valine from pyruvate: step 3/4. Functions in the biosynthesis of branched-chain amino acids. Catalyzes the dehydration of (2R,3R)-2,3-dihydroxy-3-methylpentanoate (2,3-dihydroxy-3-methylvalerate) into 2-oxo-3-methylpentanoate (2-oxo-3-methylvalerate) and of (2R)-2,3-dihydroxy-3-methylbutanoate (2,3-dihydroxyisovalerate) into 2-oxo-3-methylbutanoate (2-oxoisovalerate), the penultimate precursor to L-isoleucine and L-valine, respectively. This chain is Dihydroxy-acid dehydratase, found in Escherichia coli (strain SMS-3-5 / SECEC).